We begin with the raw amino-acid sequence, 379 residues long: RNA-splicing ligase RtcB2 (379 aa).

Positions 74, 77, 137, 168, and 239 each coordinate Mn(2+). 136-140 (NHFVE) is a GMP binding site. GMP is bound by residues 239-240 (HN), Ser277, 294-297 (HGAG), and Lys372. His294 functions as the GMP-histidine intermediate in the catalytic mechanism.

It belongs to the RtcB family. RtcB2 subfamily. Mn(2+) is required as a cofactor.

It catalyses the reaction a 3'-end 3'-phospho-ribonucleotide-RNA + a 5'-end dephospho-ribonucleoside-RNA + GTP = a ribonucleotidyl-ribonucleotide-RNA + GMP + diphosphate. In terms of biological role, GTP-dependent RNA ligase involved in rRNA repair. Repairs damaged 16S rRNA in 30S subunits that has been cleaved between adenine-1493 and guanosine-1494 (E.coli nubering). This specific cleavage is inflicted by CdiA (ECL_04451) or by colicin E3-type (ColE3) proteins. Poorly repairs damaged rRNA in the 70S ribosome; addition of release factor PrfH improves repair about 3-fold in vitro, probably because PrfH hydrolyzes the nascent chain allowing ribosomal subunit dissociation. In vivo the PrfH-RtcB2 pair restores growth in the presence of ribotoxins that specifically create this damage. Does not repair damaged tRNA (tested with tRNA(Asp) and tRNA(Arg)). The polypeptide is RNA-splicing ligase RtcB2 (Escherichia coli (strain ATCC 25922 / DSM 1103 / LMG 8223 / NCIMB 12210 / NCTC 12241 / WDCM 00013 / Seattle 1946)).